Reading from the N-terminus, the 2936-residue chain is Neurobeachin (2936 aa).

The segment at 961–985 is disordered; the sequence is ENIKKGKKGNVSTISGLSSQTAGAK. Positions 970 to 982 are enriched in polar residues; sequence NVSTISGLSSQTA. A phosphoserine mark is found at S1001 and S1004. Composition is skewed to polar residues over residues 1203-1220 and 1231-1241; these read TSDG…SSTK and TLETESSNSKA. 3 disordered regions span residues 1203–1222, 1231–1265, and 1270–1289; these read TSDG…TKGL, TLET…ESGK, and IQTT…QQDR. Over residues 1253–1265 the composition is skewed to basic and acidic residues; it reads DTERSDDGKESGK. The segment covering 1270–1286 has biased composition (polar residues); the sequence is IQTTATTQAVQGRSSTQ. Residues 1316–1358 form a WD 1 repeat; the sequence is TTMFRIPEFKWSPMHQRLLTDLLFALETDVHVWRSHSTKSVMD. Disordered regions lie at residues 1480–1521, 1639–1667, 1701–1721, and 1830–1850; these read QRDR…LSPI, PDTV…DSGM, VKKS…PAPS, and TGAV…VNGA. The residue at position 1519 (S1519) is a Phosphoserine. The segment covering 1701–1714 has biased composition (basic and acidic residues); that stretch reads VKKSQESLTEHPSE. A phosphoserine mark is found at S1704 and S1707. Positions 1835-1845 are enriched in low complexity; that stretch reads SGSSSSSSSSS. Residue S2128 is modified to Phosphoserine. In terms of domain architecture, BEACH-type PH spans 2137–2245; sequence NLAGPVVLST…TVKKVVYSLP (109 aa). The BEACH domain maps to 2264 to 2553; it reads ATPRQLYKSS…QLLIEPHPPR (290 aa). The residue at position 2565 (S2565) is a Phosphoserine. WD repeat units follow at residues 2708–2751, 2768–2808, 2850–2889, and 2892–2931; these read GHWD…HIIG, GHDH…RALE, EIND…QLYI, and GCDA…WHYE.

The protein belongs to the WD repeat neurobeachin family. In terms of assembly, interacts with RII subunit of PKA. Forebrain, brainstem and cerebellum.

It is found in the membrane. It localises to the endomembrane system. Its subcellular location is the postsynaptic cell membrane. Functionally, binds to type II regulatory subunits of protein kinase A and anchors/targets them to the membrane. May anchor the kinase to cytoskeletal and/or organelle-associated proteins. May have a role in membrane trafficking. This is Neurobeachin (Nbea) from Mus musculus (Mouse).